Reading from the N-terminus, the 270-residue chain is 4-hydroxy-tetrahydrodipicolinate reductase (270 aa).

NAD(+) contacts are provided by residues 8–13 (GALGRM), aspartate 34, 102–104 (GTT), and 128–131 (SQNY). Histidine 160 serves as the catalytic Proton donor/acceptor. Histidine 161 serves as a coordination point for (S)-2,3,4,5-tetrahydrodipicolinate. The active-site Proton donor is lysine 164. A (S)-2,3,4,5-tetrahydrodipicolinate-binding site is contributed by 170–171 (GT).

Belongs to the DapB family.

It localises to the cytoplasm. The enzyme catalyses (S)-2,3,4,5-tetrahydrodipicolinate + NAD(+) + H2O = (2S,4S)-4-hydroxy-2,3,4,5-tetrahydrodipicolinate + NADH + H(+). It catalyses the reaction (S)-2,3,4,5-tetrahydrodipicolinate + NADP(+) + H2O = (2S,4S)-4-hydroxy-2,3,4,5-tetrahydrodipicolinate + NADPH + H(+). It participates in amino-acid biosynthesis; L-lysine biosynthesis via DAP pathway; (S)-tetrahydrodipicolinate from L-aspartate: step 4/4. Its function is as follows. Catalyzes the conversion of 4-hydroxy-tetrahydrodipicolinate (HTPA) to tetrahydrodipicolinate. This Methanococcus maripaludis (strain C7 / ATCC BAA-1331) protein is 4-hydroxy-tetrahydrodipicolinate reductase.